Reading from the N-terminus, the 357-residue chain is Dihydroorotate dehydrogenase (quinone) (357 aa).

Residues 65–69 (AGLDK) and Thr-89 contribute to the FMN site. Residue Lys-69 participates in substrate binding. 114–118 (NRFGF) serves as a coordination point for substrate. Residues Asn-156 and Asn-189 each contribute to the FMN site. Residue Asn-189 participates in substrate binding. The Nucleophile role is filled by Ser-192. Position 194 (Asn-194) interacts with substrate. FMN contacts are provided by Lys-234 and Thr-262. 263-264 (NT) is a substrate binding site. FMN contacts are provided by residues Gly-285, Gly-314, and 335 to 336 (YT).

The protein belongs to the dihydroorotate dehydrogenase family. Type 2 subfamily. Monomer. FMN serves as cofactor.

It localises to the cell membrane. The enzyme catalyses (S)-dihydroorotate + a quinone = orotate + a quinol. It participates in pyrimidine metabolism; UMP biosynthesis via de novo pathway; orotate from (S)-dihydroorotate (quinone route): step 1/1. In terms of biological role, catalyzes the conversion of dihydroorotate to orotate with quinone as electron acceptor. The protein is Dihydroorotate dehydrogenase (quinone) of Albidiferax ferrireducens (strain ATCC BAA-621 / DSM 15236 / T118) (Rhodoferax ferrireducens).